We begin with the raw amino-acid sequence, 316 residues long: Transcription initiation factor IIB (316 aa).

Residues 11-42 (PKVTCPNHPDALLVEDYRAGDMICSECGLVVG) form a TFIIB-type zinc finger. Zn(2+)-binding residues include Cys-15, His-18, Cys-34, and Cys-37. A run of 2 repeats spans residues 124 to 200 (MSDR…LILK) and 218 to 294 (FCSN…LIYP).

It belongs to the TFIIB family.

It localises to the nucleus. Its subcellular location is the chromosome. The catalysed reaction is L-lysyl-[protein] + acetyl-CoA = N(6)-acetyl-L-lysyl-[protein] + CoA + H(+). In terms of biological role, general transcription factor that plays a role in transcription initiation by RNA polymerase II (Pol II). Involved in the pre-initiation complex (PIC) formation and Pol II recruitment at promoter DNA. Together with the TATA box-bound TBP forms the core initiation complex and provides a bridge between TBP and the Pol II-TFIIF complex. Released from the PIC early following the onset of transcription during the initiation and elongation transition and reassociates with TBP during the next transcription cycle. Associates with chromatin to core promoter-specific regions. Binds to two distinct DNA core promoter consensus sequence elements in a TBP-independent manner; these IIB-recognition elements (BREs) are localized immediately upstream (BREu), 5'-[GC][GC][GA]CGCC-3', and downstream (BREd), 5'-[GA]T[TGA][TG][GT][TG][TG]-3', of the TATA box element. Modulates transcription start site selection. Also exhibits autoacetyltransferase activity that contributes to the activated transcription. This is Transcription initiation factor IIB from Xenopus laevis (African clawed frog).